The sequence spans 617 residues: Neopullulanase SusA (617 aa).

Positions 1-22 (MKRNLLFIILLLLLPGLHQVFA) are cleaved as a signal peptide. Ca(2+) is bound by residues Asn138, Asn143, Asp144, Gly164, and Asp166. Active-site residues include Asp331 and Glu360.

Belongs to the glycosyl hydrolase 13 family. Ca(2+) is required as a cofactor.

Its subcellular location is the periplasm. The enzyme catalyses Hydrolysis of pullulan to panose (6-alpha-D-glucosylmaltose).. It functions in the pathway glycan degradation; starch degradation. In terms of biological role, neopullulanase that cleaves 1,4-alpha-glucosidic linkages in starch to produce disaccharides or trisaccharides in starch degradation. This chain is Neopullulanase SusA (susA), found in Bacteroides thetaiotaomicron (strain ATCC 29148 / DSM 2079 / JCM 5827 / CCUG 10774 / NCTC 10582 / VPI-5482 / E50).